A 393-amino-acid polypeptide reads, in one-letter code: Cysteine protease ATG4B (393 aa).

Residue methionine 1 is modified to N-acetylmethionine. Serine 34 carries the phosphoserine modification. Catalysis depends on cysteine 74, which acts as the Nucleophile. An S-nitrosocysteine modification is found at cysteine 189. Catalysis depends on residues aspartate 278 and histidine 280. S-nitrosocysteine is present on residues cysteine 292 and cysteine 301. An intrachain disulfide couples cysteine 292 to cysteine 361. 2 positions are modified to phosphoserine: serine 316 and serine 383. The LIR signature appears at 388 to 391 (FEIL). Serine 392 carries the post-translational modification Phosphoserine.

The protein belongs to the peptidase C54 family. Interacts with PFKP; promoting phosphorylation of ATG4B at Ser-34. Interacts with GBP7. In terms of processing, phosphorylation at Ser-383 and Ser-392 promotes autophagy by increasing protein delipidation activity without affecting proteolytic activation of ATG8 proteins. Phosphorylation at Ser-316 by ULK1 inhibits autophagy by decreasing both proteolytic activation and delipidation activities. Phosphorylation at Ser-316 is dephosphorylated by protein phosphatase 2A (PP2A). Phosphorylation at Ser-34 by AKT2 promotes its hydrolase activity, leading to increased proteolytic activation and delipidation of ATG8 family proteins. Phosphorylation at Ser-34 by AKT1 promotes mitochondrial localization and inhibition of the F1F0-ATP synthase activity, leading to elevation of mitochondrial reactive oxygen species (ROS). Post-translationally, ubiquitinated by RNF5, leading to its degradation by the proteasome. S-nitrosylation at Cys-189 and Cys-292 in response to high glucose decreases both proteolytic activation and delipidation activities. In terms of processing, O-glycosylated by OGT, leading to increase protease activity, thereby promoting the proteolytic activation of ATG8 family proteins. Post-translationally, forms reversible intrachain disulfide bonds in response to oxidative stress. Forms interchain disulfide bonds, leading to formation of homooligomers in response to oxidation.

The protein resides in the cytoplasm. Its subcellular location is the cytosol. The protein localises to the cytoplasmic vesicle. It is found in the autophagosome. It localises to the endoplasmic reticulum. The protein resides in the mitochondrion. The enzyme catalyses [protein]-C-terminal L-amino acid-glycyl-phosphatidylethanolamide + H2O = [protein]-C-terminal L-amino acid-glycine + a 1,2-diacyl-sn-glycero-3-phosphoethanolamine. It carries out the reaction [protein]-C-terminal L-amino acid-glycyl-phosphatidylserine + H2O = [protein]-C-terminal L-amino acid-glycine + a 1,2-diacyl-sn-glycero-3-phospho-L-serine. With respect to regulation, inhibited by N-ethylmaleimide. Redox-regulated during autophagy since reducing conditions activate ATG4A whereas an oxidizing environment such as the presence of H(2)O(2) inhibits its activity. The cysteine protease activity compounds is inhibited by styrylquinoline compounds 4-28 and LV-320. Its function is as follows. Cysteine protease that plays a key role in autophagy by mediating both proteolytic activation and delipidation of ATG8 family proteins. Required for canonical autophagy (macroautophagy), non-canonical autophagy as well as for mitophagy. The protease activity is required for proteolytic activation of ATG8 family proteins: cleaves the C-terminal amino acid of ATG8 proteins MAP1LC3A, MAP1LC3B, MAP1LC3C, GABARAPL1, GABARAPL2 and GABARAP, to reveal a C-terminal glycine. Exposure of the glycine at the C-terminus is essential for ATG8 proteins conjugation to phosphatidylethanolamine (PE) and insertion to membranes, which is necessary for autophagy. Protease activity is also required to counteract formation of high-molecular weight conjugates of ATG8 proteins (ATG8ylation): acts as a deubiquitinating-like enzyme that removes ATG8 conjugated to other proteins, such as ATG3. In addition to the protease activity, also mediates delipidation of ATG8 family proteins. Catalyzes delipidation of PE-conjugated forms of ATG8 proteins during macroautophagy. Also involved in non-canonical autophagy, a parallel pathway involving conjugation of ATG8 proteins to single membranes at endolysosomal compartments, by catalyzing delipidation of ATG8 proteins conjugated to phosphatidylserine (PS). Compared to other members of the family (ATG4A, ATG4C or ATG4C), constitutes the major protein for proteolytic activation of ATG8 proteins, while it displays weaker delipidation activity than other ATG4 paralogs. Involved in phagophore growth during mitophagy independently of its protease activity and of ATG8 proteins: acts by regulating ATG9A trafficking to mitochondria and promoting phagophore-endoplasmic reticulum contacts during the lipid transfer phase of mitophagy. In terms of biological role, (Microbial infection) Mediates cleavage of an ATG8 protein homolog coded in the genome of cytopathogenic bovine viral diarrhea virus (BVDV). The chain is Cysteine protease ATG4B (ATG4B) from Bos taurus (Bovine).